The following is a 94-amino-acid chain: Large ribosomal subunit protein bL25 (94 aa).

It belongs to the bacterial ribosomal protein bL25 family. Part of the 50S ribosomal subunit; part of the 5S rRNA/L5/L18/L25 subcomplex. Contacts the 5S rRNA. Binds to the 5S rRNA independently of L5 and L18.

This is one of the proteins that binds to the 5S RNA in the ribosome where it forms part of the central protuberance. This chain is Large ribosomal subunit protein bL25, found in Salmonella arizonae (strain ATCC BAA-731 / CDC346-86 / RSK2980).